The primary structure comprises 789 residues: Protein FLOWERING LOCUS D (789 aa).

Residues 1 to 23 (MVSFSAPKKRRRGRSQRSMSSLN) form a disordered region. The SWIRM domain occupies 76–177 (NKEATTEALL…FGIAQAIKDK (102 aa)). FAD is bound by residues Ser-195, Glu-214, Arg-216, Arg-222, and 240 to 243 (GGSV). Lys-287 participates in a covalent cross-link: Glycyl lysine isopeptide (Lys-Gly) (interchain with G-Cter in SUMO). FAD is bound by residues Glu-595, 604 to 605 (TM), and 607 to 612 (GAFVTG). Glycyl lysine isopeptide (Lys-Gly) (interchain with G-Cter in SUMO) cross-links involve residues Lys-693 and Lys-770.

The protein belongs to the flavin monoamine oxidase family. Interacts with HDA6. FAD serves as cofactor. Sumoylated at Lys-287, Lys-693 and Lys-770 by SIZ1. Sumoylation alters its activity and the histone H4 acetylation status of FLC locus, promoting FLC expression.

In terms of biological role, probable histone demethylase that promotes flowering independently of the photoperiod and vernalization pathways by repressing FLOWERING LOCUS C (FLC), a floral repressor that blocks the transition from vegetative to reproductive development. Probably mediates histone H3 'Lys-4' demethylation at FLC locus. Seems to act in partial redundancy with LDL1 and LDL2 to repress FLC expression. Required for histone H4 deacetylation of FLC locus. May be a component of the histone deacetylase complex. Forms a histone deacetylase complex with HDA5, HDA6 and MSI4/FVE that represses FLC gene expression to control flowering time. Required for systemic acquired resistance (SAR) toward pathogenic bacteria (e.g. Pseudomonas syringae pv tomato DC3000 (avrPto)). Together with FLD and MSI4/FVE, contributes to dehydroabietinal-dependent (DA, a diterpenoid tricyclic diterpene) activation of flowering ans SAR. The polypeptide is Protein FLOWERING LOCUS D (Arabidopsis thaliana (Mouse-ear cress)).